A 341-amino-acid chain; its full sequence is S-adenosylmethionine:tRNA ribosyltransferase-isomerase (341 aa).

Belongs to the QueA family. In terms of assembly, monomer.

The protein localises to the cytoplasm. The enzyme catalyses 7-aminomethyl-7-carbaguanosine(34) in tRNA + S-adenosyl-L-methionine = epoxyqueuosine(34) in tRNA + adenine + L-methionine + 2 H(+). Its pathway is tRNA modification; tRNA-queuosine biosynthesis. In terms of biological role, transfers and isomerizes the ribose moiety from AdoMet to the 7-aminomethyl group of 7-deazaguanine (preQ1-tRNA) to give epoxyqueuosine (oQ-tRNA). In Staphylococcus aureus (strain USA300), this protein is S-adenosylmethionine:tRNA ribosyltransferase-isomerase.